A 611-amino-acid chain; its full sequence is Adenosylhomocysteinase 3 (611 aa).

3 stretches are compositionally biased toward low complexity: residues Met1–Val14, Ala40–Ala57, and Gly68–Gly78. The segment at Met1 to Ser184 is disordered. Position 2 is an N-acetylserine (Ser2). Residues Ser2–Asp109 form an LISN domain, inhibits interaction with ITPR1 region. Phosphoserine is present on Ser107. The segment covering Arg135–Leu144 has biased composition (basic residues). The span at Ser145–Asp164 shows a compositional bias: low complexity. Phosphoserine is present on residues Ser149, Ser152, Ser155, and Ser158. The substrate site is built by Thr236, Asp310, and Glu335. Ser336–Thr338 is an NAD(+) binding site. The substrate site is built by Lys365 and Asp369. Residues Asn370, Gly401 to Gly406, Glu422, Asn457, Met478 to Gly479, and Asn525 contribute to the NAD(+) site.

It belongs to the adenosylhomocysteinase family. In terms of assembly, homotetramer. Forms heteromultimers with AHCYL1 (via the C-terminal region). Interacts with ITPR1; with lower affinity than AHCYL1 and maybe via ITPR1. Interacts with SLC4A4. Interacts with ZCCHC4. NAD(+) serves as cofactor. Phosphorylated during neuronal differentiation at the LISN domain. As to expression, expressed in parotid and acinar cells (at protein level).

The protein localises to the cytoplasm. It is found in the microsome. It catalyses the reaction S-adenosyl-L-homocysteine + H2O = L-homocysteine + adenosine. It participates in amino-acid biosynthesis; L-homocysteine biosynthesis; L-homocysteine from S-adenosyl-L-homocysteine: step 1/1. In terms of biological role, may regulate the electrogenic sodium/bicarbonate cotransporter SLC4A4 activity and Mg(2+)-sensitivity. On the contrary of its homolog AHCYL1, does not regulate ITPR1 sensitivity to inositol 1,4,5-trisphosphate. This Bos taurus (Bovine) protein is Adenosylhomocysteinase 3.